A 66-amino-acid polypeptide reads, in one-letter code: Putative ankyrin repeat protein RF_pd14 (66 aa).

An ANK repeat occupies 14 to 66 (KLNQKLMRAAATGDIEAVQKLVLRGADIYCRDHQGDTALSLAAGSGYLDILDI).

The sequence is that of Putative ankyrin repeat protein RF_pd14 from Rickettsia felis (strain ATCC VR-1525 / URRWXCal2) (Rickettsia azadi).